Consider the following 172-residue polypeptide: NADH-quinone oxidoreductase subunit B 1 (172 aa).

[4Fe-4S] cluster contacts are provided by Cys42, Cys43, Cys107, and Cys137.

Belongs to the complex I 20 kDa subunit family. In terms of assembly, NDH-1 is composed of 14 different subunits. Subunits NuoB, C, D, E, F, and G constitute the peripheral sector of the complex. [4Fe-4S] cluster is required as a cofactor.

The protein resides in the cell inner membrane. It catalyses the reaction a quinone + NADH + 5 H(+)(in) = a quinol + NAD(+) + 4 H(+)(out). NDH-1 shuttles electrons from NADH, via FMN and iron-sulfur (Fe-S) centers, to quinones in the respiratory chain. Couples the redox reaction to proton translocation (for every two electrons transferred, four hydrogen ions are translocated across the cytoplasmic membrane), and thus conserves the redox energy in a proton gradient. This chain is NADH-quinone oxidoreductase subunit B 1, found in Anaeromyxobacter sp. (strain Fw109-5).